Here is a 344-residue protein sequence, read N- to C-terminus: GTP 3',8-cyclase (344 aa).

In terms of domain architecture, Radical SAM core spans 19-245 (PFGRAVTYLR…DIPYRTGGPA (227 aa)). R28 contacts GTP. Positions 35 and 39 each coordinate [4Fe-4S] cluster. S-adenosyl-L-methionine is bound at residue Y41. Residue C42 coordinates [4Fe-4S] cluster. R77 serves as a coordination point for GTP. G81 is a binding site for S-adenosyl-L-methionine. GTP is bound at residue T111. S135 contacts S-adenosyl-L-methionine. K171 provides a ligand contact to GTP. M205 contributes to the S-adenosyl-L-methionine binding site. [4Fe-4S] cluster-binding residues include C268 and C271. 273–275 (RVR) lines the GTP pocket. C285 lines the [4Fe-4S] cluster pocket.

The protein belongs to the radical SAM superfamily. MoaA family. Monomer and homodimer. It depends on [4Fe-4S] cluster as a cofactor.

It carries out the reaction GTP + AH2 + S-adenosyl-L-methionine = (8S)-3',8-cyclo-7,8-dihydroguanosine 5'-triphosphate + 5'-deoxyadenosine + L-methionine + A + H(+). The protein operates within cofactor biosynthesis; molybdopterin biosynthesis. Functionally, catalyzes the cyclization of GTP to (8S)-3',8-cyclo-7,8-dihydroguanosine 5'-triphosphate. The chain is GTP 3',8-cyclase from Brucella abortus (strain S19).